The sequence spans 154 residues: Myoglobin (154 aa).

In terms of domain architecture, Globin spans 2–148; the sequence is GLSDQEWQQV…FRNDMASKYK (147 aa). Histidine 65 lines the nitrite pocket. Histidine 65 serves as a coordination point for O2. Histidine 94 provides a ligand contact to heme b.

It belongs to the globin family. In terms of assembly, monomeric.

It is found in the cytoplasm. Its subcellular location is the sarcoplasm. The enzyme catalyses Fe(III)-heme b-[protein] + nitric oxide + H2O = Fe(II)-heme b-[protein] + nitrite + 2 H(+). It carries out the reaction H2O2 + AH2 = A + 2 H2O. Its function is as follows. Monomeric heme protein which primary function is to store oxygen and facilitate its diffusion within muscle tissues. Reversibly binds oxygen through a pentacoordinated heme iron and enables its timely and efficient release as needed during periods of heightened demand. Depending on the oxidative conditions of tissues and cells, and in addition to its ability to bind oxygen, it also has a nitrite reductase activity whereby it regulates the production of bioactive nitric oxide. Under stress conditions, like hypoxia and anoxia, it also protects cells against reactive oxygen species thanks to its pseudoperoxidase activity. This chain is Myoglobin (MB), found in Gallus gallus (Chicken).